The following is a 360-amino-acid chain: AA9 family lytic polysaccharide monooxygenase A (360 aa).

Positions 1-19 are cleaved as a signal peptide; sequence MKTSFGLLALAAAAKLVNA. Positions 20 and 102 each coordinate Cu(2+). The cysteines at positions 62 and 183 are disulfide-linked. Residue histidine 169 coordinates O2. Tyrosine 180 contacts Cu(2+). The tract at residues 254 to 293 is disordered; it reads TSAASASSTKAPATTAAPVQTESAKPATSTTQAAAPTTLV. Positions 322–358 constitute a CBM1 domain; that stretch reads GVVKMYAQCGGMNYSGSTTCESGLTCKQWNPYYHQCV. Asparagine 334 carries an N-linked (GlcNAc...) asparagine glycan.

This sequence belongs to the polysaccharide monooxygenase AA9 family. The cofactor is Cu(2+).

Its subcellular location is the secreted. It catalyses the reaction [(1-&gt;4)-beta-D-glucosyl]n+m + reduced acceptor + O2 = 4-dehydro-beta-D-glucosyl-[(1-&gt;4)-beta-D-glucosyl]n-1 + [(1-&gt;4)-beta-D-glucosyl]m + acceptor + H2O.. Functionally, lytic polysaccharide monooxygenase (LPMO) that depolymerizes crystalline and amorphous polysaccharides via the oxidation of scissile alpha- or beta-(1-4)-glycosidic bonds, yielding C4 oxidation products. Catalysis by LPMOs requires the reduction of the active-site copper from Cu(II) to Cu(I) by a reducing agent and H(2)O(2) or O(2) as a cosubstrate. The polypeptide is AA9 family lytic polysaccharide monooxygenase A (eglD) (Aspergillus terreus (strain NIH 2624 / FGSC A1156)).